Here is a 256-residue protein sequence, read N- to C-terminus: Small ribosomal subunit protein uS2 (256 aa).

The protein belongs to the universal ribosomal protein uS2 family.

The sequence is that of Small ribosomal subunit protein uS2 from Methylococcus capsulatus (strain ATCC 33009 / NCIMB 11132 / Bath).